Here is a 416-residue protein sequence, read N- to C-terminus: GTPase Obg (416 aa).

Positions 1-157 (MFQDVLVITV…RRLRLELMLI (157 aa)) constitute an Obg domain. Disordered stretches follow at residues 25–44 (EKFV…GGSV) and 62–82 (TYKA…RGGE). Over residues 32 to 42 (GPDGGDGGRGG) the composition is skewed to gly residues. The span at 63 to 72 (YKAEDGEHGR) shows a compositional bias: basic and acidic residues. Residues 158–324 (ADVGLVGYPN…LKEALHALVR (167 aa)) form the OBG-type G domain. GTP is bound by residues 164–171 (GYPNAGKS), 189–193 (FTTLS), 211–214 (DIPG), 277–280 (NKVD), and 305–307 (SAL). Residues serine 171 and threonine 191 each contribute to the Mg(2+) site. One can recognise an OCT domain in the interval 336–414 (PRKEVQAGVE…IGGLEFEYIP (79 aa)).

It belongs to the TRAFAC class OBG-HflX-like GTPase superfamily. OBG GTPase family. As to quaternary structure, monomer. The cofactor is Mg(2+).

The protein localises to the cytoplasm. Functionally, an essential GTPase which binds GTP, GDP and possibly (p)ppGpp with moderate affinity, with high nucleotide exchange rates and a fairly low GTP hydrolysis rate. Plays a role in control of the cell cycle, stress response, ribosome biogenesis and in those bacteria that undergo differentiation, in morphogenesis control. The polypeptide is GTPase Obg (Thermus thermophilus (strain ATCC 27634 / DSM 579 / HB8)).